The primary structure comprises 371 residues: uncharacterized protein (371 aa).

A run of 8 helical transmembrane segments spans residues 4–24 (LPML…FIYG), 60–82 (LIQL…ALYG), 87–109 (LWIV…MLSI), 130–150 (VFIN…FVAS), 197–217 (VVAV…LLPV), 224–244 (IYPL…YGLV), 282–302 (VPIW…GFHA), and 320–340 (FIFY…CMVG).

Belongs to the peptide transporter carbon starvation (CstA) (TC 2.A.114) family.

Its subcellular location is the cell membrane. This is an uncharacterized protein from Haemophilus influenzae (strain ATCC 51907 / DSM 11121 / KW20 / Rd).